The sequence spans 247 residues: Putative 2-succinyl-6-hydroxy-2,4-cyclohexadiene-1-carboxylate synthase (247 aa).

The AB hydrolase-1 domain occupies 4-229; it reads IIFLHGLLGT…CAGHNSHLEN (226 aa).

It belongs to the AB hydrolase superfamily. MenH family. In terms of assembly, monomer.

It catalyses the reaction 5-enolpyruvoyl-6-hydroxy-2-succinyl-cyclohex-3-ene-1-carboxylate = (1R,6R)-6-hydroxy-2-succinyl-cyclohexa-2,4-diene-1-carboxylate + pyruvate. Its pathway is quinol/quinone metabolism; 1,4-dihydroxy-2-naphthoate biosynthesis; 1,4-dihydroxy-2-naphthoate from chorismate: step 3/7. The protein operates within quinol/quinone metabolism; menaquinone biosynthesis. In terms of biological role, catalyzes a proton abstraction reaction that results in 2,5-elimination of pyruvate from 2-succinyl-5-enolpyruvyl-6-hydroxy-3-cyclohexene-1-carboxylate (SEPHCHC) and the formation of 2-succinyl-6-hydroxy-2,4-cyclohexadiene-1-carboxylate (SHCHC). The chain is Putative 2-succinyl-6-hydroxy-2,4-cyclohexadiene-1-carboxylate synthase from Haemophilus influenzae (strain ATCC 51907 / DSM 11121 / KW20 / Rd).